A 127-amino-acid polypeptide reads, in one-letter code: uncharacterized protein (127 aa).

This is an uncharacterized protein from Acidianus two-tailed virus (ATV).